A 266-amino-acid chain; its full sequence is 4-diphosphocytidyl-2-C-methyl-D-erythritol kinase (266 aa).

Residue Lys-11 is part of the active site. Position 103–113 (103–113) interacts with ATP; it reads PTFAGLGGGSS. The active site involves Asp-145.

Belongs to the GHMP kinase family. IspE subfamily.

The enzyme catalyses 4-CDP-2-C-methyl-D-erythritol + ATP = 4-CDP-2-C-methyl-D-erythritol 2-phosphate + ADP + H(+). The protein operates within isoprenoid biosynthesis; isopentenyl diphosphate biosynthesis via DXP pathway; isopentenyl diphosphate from 1-deoxy-D-xylulose 5-phosphate: step 3/6. In terms of biological role, catalyzes the phosphorylation of the position 2 hydroxy group of 4-diphosphocytidyl-2C-methyl-D-erythritol. The protein is 4-diphosphocytidyl-2-C-methyl-D-erythritol kinase of Sulfurimonas denitrificans (strain ATCC 33889 / DSM 1251) (Thiomicrospira denitrificans (strain ATCC 33889 / DSM 1251)).